We begin with the raw amino-acid sequence, 123 residues long: Angiogenin-2 (123 aa).

Q1 carries the pyrrolidone carboxylic acid modification. Residue H12 is the Proton acceptor of the active site. Intrachain disulfides connect C25-C80, C38-C91, and C56-C106. The Nucleolar localization signal motif lies at E30 to M34. A glycan (N-linked (GlcNAc...) asparagine) is linked at N33. Residues D40, H82, and H113 each contribute to the Zn(2+) site. The active-site Proton donor is the H113.

The protein belongs to the pancreatic ribonuclease family. In terms of tissue distribution, serum and milk.

It is found in the cytoplasmic vesicle. The protein resides in the secretory vesicle lumen. Its subcellular location is the secreted. The protein localises to the nucleus. It localises to the nucleolus. Its activity is regulated as follows. Divalent metal ions, such as Cu2+ and Zn2+, may inhibit the ribonucleolytic activity. Binds tightly to placental ribonuclease inhibitor and has very low ribonuclease activity. Has potent angiogenic activity. Angiogenin induces vascularization of normal and malignant tissues. Abolishes protein synthesis by specifically hydrolyzing cellular tRNAs. This chain is Angiogenin-2, found in Bos taurus (Bovine).